We begin with the raw amino-acid sequence, 296 residues long: UDP-N-acetylenolpyruvoylglucosamine reductase (296 aa).

The 166-residue stretch at 26–191 (RIGGPANYFK…LSATFRLSKS (166 aa)) folds into the FAD-binding PCMH-type domain. Arg-170 is an active-site residue. Catalysis depends on Cys-218, which acts as the Proton donor. Glu-287 is a catalytic residue.

Belongs to the MurB family. The cofactor is FAD.

Its subcellular location is the cytoplasm. The catalysed reaction is UDP-N-acetyl-alpha-D-muramate + NADP(+) = UDP-N-acetyl-3-O-(1-carboxyvinyl)-alpha-D-glucosamine + NADPH + H(+). It participates in cell wall biogenesis; peptidoglycan biosynthesis. Its function is as follows. Cell wall formation. This Chlamydia felis (strain Fe/C-56) (Chlamydophila felis) protein is UDP-N-acetylenolpyruvoylglucosamine reductase.